Here is a 523-residue protein sequence, read N- to C-terminus: Apolipoprotein N-acyltransferase (523 aa).

7 helical membrane passes run 26 to 46 (LRFAAPLAALLGVMHTLAFAP), 49 to 66 (WWWLQILSLAGLAALVRQ), 74 to 94 (AWVGYAFGLGWFLSGIWWLYI), 109 to 129 (AAVLLFSAYLALHPALAAWLW), 137 to 157 (QLSGAASALVFGAAWLVSEWL), 185 to 205 (LVGVYGVVAIAATLAGLLCAA), and 212 to 232 (WLAGLAGVAVLAAGWPLHTIA). The CN hydrolase domain maps to 246-487 (LQGNVPQDVK…LGTLQADVQG (242 aa)). The active-site Proton acceptor is Glu284. The active site involves Lys345. Cys395 serves as the catalytic Nucleophile. Residues 494 to 514 (FVRTGNAPALGAGVLVLLAAL) form a helical membrane-spanning segment.

Belongs to the CN hydrolase family. Apolipoprotein N-acyltransferase subfamily.

The protein resides in the cell inner membrane. It catalyses the reaction N-terminal S-1,2-diacyl-sn-glyceryl-L-cysteinyl-[lipoprotein] + a glycerophospholipid = N-acyl-S-1,2-diacyl-sn-glyceryl-L-cysteinyl-[lipoprotein] + a 2-acyl-sn-glycero-3-phospholipid + H(+). Its pathway is protein modification; lipoprotein biosynthesis (N-acyl transfer). Its function is as follows. Catalyzes the phospholipid dependent N-acylation of the N-terminal cysteine of apolipoprotein, the last step in lipoprotein maturation. The polypeptide is Apolipoprotein N-acyltransferase (Ralstonia nicotianae (strain ATCC BAA-1114 / GMI1000) (Ralstonia solanacearum)).